Reading from the N-terminus, the 428-residue chain is Dihydroorotase (428 aa).

Residues histidine 60 and histidine 62 each contribute to the Zn(2+) site. Substrate-binding positions include histidine 62–arginine 64 and asparagine 94. Aspartate 152, histidine 179, and histidine 232 together coordinate Zn(2+). Asparagine 278 is a binding site for substrate. Aspartate 305 provides a ligand contact to Zn(2+). Residue aspartate 305 is part of the active site. Substrate is bound by residues histidine 309 and phenylalanine 323–glycine 324.

The protein belongs to the metallo-dependent hydrolases superfamily. DHOase family. Class I DHOase subfamily. Zn(2+) is required as a cofactor.

The catalysed reaction is (S)-dihydroorotate + H2O = N-carbamoyl-L-aspartate + H(+). Its pathway is pyrimidine metabolism; UMP biosynthesis via de novo pathway; (S)-dihydroorotate from bicarbonate: step 3/3. Functionally, catalyzes the reversible cyclization of carbamoyl aspartate to dihydroorotate. The polypeptide is Dihydroorotase (Anoxybacillus flavithermus (strain DSM 21510 / WK1)).